A 235-amino-acid polypeptide reads, in one-letter code: Uridylate kinase (235 aa).

Residue 9 to 12 coordinates ATP; that stretch reads KISG. G50 serves as a coordination point for UMP. ATP is bound by residues G51 and R55. UMP is bound by residues D70 and 131–138; that span reads TGFPYFTT. ATP contacts are provided by N159, Y165, and D168.

The protein belongs to the UMP kinase family. As to quaternary structure, homohexamer; trimer of dimers.

The protein localises to the cytoplasm. The enzyme catalyses UMP + ATP = UDP + ADP. The protein operates within pyrimidine metabolism; CTP biosynthesis via de novo pathway; UDP from UMP (UMPK route): step 1/1. Its activity is regulated as follows. Unlike other bacteria, is not activated by GTP. UTP is a competitive inhibitor against UMP and a non-competitive inhibitor toward ATP. Its function is as follows. Catalyzes the reversible phosphorylation of UMP to UDP, with ATP as the most efficient phosphate donor. Is also able to phosphorylate dUMP. The sequence is that of Uridylate kinase (pyrH) from Ureaplasma parvum serovar 3 (strain ATCC 700970).